A 194-amino-acid polypeptide reads, in one-letter code: Phosphoheptose isomerase (194 aa).

The 158-residue stretch at 37–194 (ISNSFKQGGK…LIEFEMAKQA (158 aa)) folds into the SIS domain. A substrate-binding site is contributed by 52–54 (NGG). Zn(2+) is bound by residues histidine 61 and glutamate 65. Residues glutamate 65, 93 to 94 (ND), 119 to 121 (STS), serine 124, and glutamine 172 contribute to the substrate site. Zn(2+) is bound by residues glutamine 172 and histidine 180.

This sequence belongs to the SIS family. GmhA subfamily. As to quaternary structure, homotetramer. It depends on Zn(2+) as a cofactor.

The protein resides in the cytoplasm. The catalysed reaction is 2 D-sedoheptulose 7-phosphate = D-glycero-alpha-D-manno-heptose 7-phosphate + D-glycero-beta-D-manno-heptose 7-phosphate. It functions in the pathway carbohydrate biosynthesis; D-glycero-D-manno-heptose 7-phosphate biosynthesis; D-glycero-alpha-D-manno-heptose 7-phosphate and D-glycero-beta-D-manno-heptose 7-phosphate from sedoheptulose 7-phosphate: step 1/1. Its pathway is bacterial outer membrane biogenesis; LOS core biosynthesis. Catalyzes the isomerization of sedoheptulose 7-phosphate in D-glycero-D-manno-heptose 7-phosphate. The sequence is that of Phosphoheptose isomerase from Haemophilus influenzae (strain ATCC 51907 / DSM 11121 / KW20 / Rd).